Here is a 350-residue protein sequence, read N- to C-terminus: 26S proteasome non-ATPase regulatory subunit 8 (350 aa).

Residues 1–24 (MFIKGRAPRAPPRERRRATRGGLR) are disordered. Position 106 is a phosphoserine (serine 106). A PCI domain is found at 162–331 (PSFERYMAQL…QQKPEDTTIP (170 aa)). A Glycyl lysine isopeptide (Lys-Gly) (interchain with G-Cter in SUMO2) cross-link involves residue lysine 297.

Belongs to the proteasome subunit S14 family. As to quaternary structure, component of the 19S proteasome regulatory particle complex. The 26S proteasome consists of a 20S core particle (CP) and two 19S regulatory subunits (RP). The regulatory particle is made of a lid composed of 9 subunits including PSMD8, a base containing 6 ATPases and few additional components. Interacts with DDI2. Interacts with TASOR.

Functionally, component of the 26S proteasome, a multiprotein complex involved in the ATP-dependent degradation of ubiquitinated proteins. This complex plays a key role in the maintenance of protein homeostasis by removing misfolded or damaged proteins, which could impair cellular functions, and by removing proteins whose functions are no longer required. Therefore, the proteasome participates in numerous cellular processes, including cell cycle progression, apoptosis, or DNA damage repair. This is 26S proteasome non-ATPase regulatory subunit 8 (PSMD8) from Homo sapiens (Human).